We begin with the raw amino-acid sequence, 331 residues long: Fructose-1,6-bisphosphatase class 1 2 (331 aa).

Positions 91, 112, 114, and 115 each coordinate Mg(2+). Residues Asp115–Ser118, Asn207, Tyr238, and Lys268 each bind substrate. Glu274 contributes to the Mg(2+) binding site.

It belongs to the FBPase class 1 family. Homotetramer. Requires Mg(2+) as cofactor.

Its subcellular location is the cytoplasm. The enzyme catalyses beta-D-fructose 1,6-bisphosphate + H2O = beta-D-fructose 6-phosphate + phosphate. The protein operates within carbohydrate biosynthesis; Calvin cycle. The protein is Fructose-1,6-bisphosphatase class 1 2 of Acaryochloris marina (strain MBIC 11017).